The chain runs to 209 residues: MTMTRLETLKHNLQAALGADIALTEALGELTLEVPADQWLAVCNKLRTDAGLSFETCIDLCGVDYLTWGNGTRQAGEDKVAGVQRSRYAVVAHLLSIAHNWRLRVRTWAPDDDFPMVGSLIDCWPGVNWFEREAFDLFGIVFEGHPDLRRILTDYGFIGHPFRKDFPLSGTVEMRYDPEQRRVIYQPVTIDPREITPRVVREDSYGLGR.

Belongs to the complex I 30 kDa subunit family. In terms of assembly, NDH-1 is composed of 14 different subunits. Subunits NuoB, C, D, E, F, and G constitute the peripheral sector of the complex.

The protein localises to the cell inner membrane. The enzyme catalyses a quinone + NADH + 5 H(+)(in) = a quinol + NAD(+) + 4 H(+)(out). NDH-1 shuttles electrons from NADH, via FMN and iron-sulfur (Fe-S) centers, to quinones in the respiratory chain. The immediate electron acceptor for the enzyme in this species is believed to be ubiquinone. Couples the redox reaction to proton translocation (for every two electrons transferred, four hydrogen ions are translocated across the cytoplasmic membrane), and thus conserves the redox energy in a proton gradient. This is NADH-quinone oxidoreductase subunit C from Bordetella petrii (strain ATCC BAA-461 / DSM 12804 / CCUG 43448).